The chain runs to 242 residues: Uroporphyrinogen-III C-methyltransferase (242 aa).

Residues Pro-12, 88 to 90, 118 to 119, and Met-170 each bind S-adenosyl-L-homocysteine; these read GGD and TS.

Belongs to the precorrin methyltransferase family. Homodimer.

It carries out the reaction uroporphyrinogen III + 2 S-adenosyl-L-methionine = precorrin-2 + 2 S-adenosyl-L-homocysteine + H(+). It functions in the pathway cofactor biosynthesis; adenosylcobalamin biosynthesis; precorrin-2 from uroporphyrinogen III: step 1/1. Its function is as follows. Catalyzes the two successive C-2 and C-7 methylation reactions involved in the conversion of uroporphyrinogen III to precorrin-2 via the intermediate formation of precorrin-1. It is a step in the biosynthesis of both cobalamin (vitamin B12) and coenzyme F430. This Methanocaldococcus jannaschii (strain ATCC 43067 / DSM 2661 / JAL-1 / JCM 10045 / NBRC 100440) (Methanococcus jannaschii) protein is Uroporphyrinogen-III C-methyltransferase (cobA).